The following is a 505-amino-acid chain: MVNSSPVPGALAIFGTASDVGKSIVATALCRMFSNAGIDVAPYKAQNMSNNSGVTPDGCEIGRAQIAQAEAARVVPTADMNPVLLKPNSDTGAQIVLQGKVCSTETAKGYFLDTSLWAEAARKSLDQLMQRHELVVIEGAGSCAEMNLYDRDFVNFRTARISGAPVILVADIDRGGVFAQVVGTLAVLPPEDRALVKGVIINRFRGDIDLFRDGVKLIETLAGIPVLGVIPYFRGFRIDAEDAVPLSSKVDPSGAPEKGRIAVAAIYFPHISNFTDLSPLELDPKVELHYLHFPRSLRGYQALILPGTKNVRGDLDWLTSLGWAEKIREFRRDGGLIMGICGGYQMLGATIADPSGVEGEPGESAGLGMLPVHTVLEEEKCLSNAIGNIQGESIAVSGYEIHMGRTTSNGDCSSFLRVTARNNRPADDVDGVITPDGKVIGTYFHGIIDEPEVRCWFLRQIDPAYTPDAEERGRQESYDLLADHFSGYLDIPKLYEIIQRPCPNP.

Positions 260 to 453 (RIAVAAIYFP…FHGIIDEPEV (194 aa)) constitute a GATase cobBQ-type domain. Cys-341 serves as the catalytic Nucleophile. Residue His-445 is part of the active site.

It belongs to the CobB/CobQ family. CobQ subfamily.

It functions in the pathway cofactor biosynthesis; adenosylcobalamin biosynthesis. Functionally, catalyzes amidations at positions B, D, E, and G on adenosylcobyrinic A,C-diamide. NH(2) groups are provided by glutamine, and one molecule of ATP is hydrogenolyzed for each amidation. This is Cobyric acid synthase from Chlorobium phaeobacteroides (strain DSM 266 / SMG 266 / 2430).